We begin with the raw amino-acid sequence, 502 residues long: Mannitol 2-dehydrogenase (502 aa).

Residue 37-48 coordinates NAD(+); sequence IVHIGVGGFHRA.

It belongs to the mannitol dehydrogenase family. As to quaternary structure, monomer.

The catalysed reaction is D-mannitol + NAD(+) = D-fructose + NADH + H(+). Catalyzes the NAD(H)-dependent interconversion of D-fructose and D-mannitol in the mannitol metabolic pathway. The chain is Mannitol 2-dehydrogenase from Aspergillus clavatus (strain ATCC 1007 / CBS 513.65 / DSM 816 / NCTC 3887 / NRRL 1 / QM 1276 / 107).